Reading from the N-terminus, the 364-residue chain is Paraneoplastic antigen Ma2 homolog (364 aa).

Alanine 2 carries the N-acetylalanine modification. Residues 335 to 351 (EEEEATFENENTEEPEG) show a composition bias toward acidic residues. The interval 335-364 (EEEEATFENENTEEPEGGDGYGHWGNEAND) is disordered.

Belongs to the PNMA family.

The protein resides in the nucleus. It is found in the nucleolus. The sequence is that of Paraneoplastic antigen Ma2 homolog (PNMA2) from Bos taurus (Bovine).